A 197-amino-acid polypeptide reads, in one-letter code: Protein SPMIP2 (197 aa).

Residues 161-197 (SKAALPIGSRPPKLPKLPKKEEKSKFRPLHQHDARCY) form a disordered region. The segment covering 178 to 197 (PKKEEKSKFRPLHQHDARCY) has biased composition (basic and acidic residues).

This is Protein SPMIP2 (SPMIP2) from Bos taurus (Bovine).